Reading from the N-terminus, the 469-residue chain is MKSSVEQLNPTRVRINVEVPFTELEPDFQRAYKELARHVQLPGFRPGKVPARLLEARFGRETLLDQVVNEAMPSRYGQALAESEVQPIGQPEIEVIRKEYGQDLAFTVEVEVRPKIALPDFSTLKVVVDPVEVSTDDVEAELRSLRARFGTLIGVDRPVALGDFVSIDLSATINGEKVPNADAEGLSHEVGYGRLIAGLDDALVGLSAGESRVFTTQLATSKHAGQDAEVIVTVKSVKERELPEPDDEFAQLVSEFDTMAELRANLGDQVRKAKYAQQAEKIRDAAVDALLERVDVPLPEGIVQAQFNNALHDALSGLGHDEAKFAEVLAERGSSREEFEAEARSAAERDVTRQLLLDVVADDQKIQVGQDDLNERLLATSQQYGVDAQQLFGFLRENNRLSSLVTDARRRLAVAAVVEAATFTDSDGNTIDTSEFFGKHAQSDKADQKTEEADPNSDAIDEEVDEAAE.

Residues glycine 162–proline 243 form the PPIase FKBP-type domain. Residues asparagine 429–glutamate 469 form a disordered region. The span at phenylalanine 437 to glutamate 452 shows a compositional bias: basic and acidic residues. A compositionally biased stretch (acidic residues) spans alanine 453–glutamate 469.

The protein belongs to the FKBP-type PPIase family. Tig subfamily.

It is found in the cytoplasm. The catalysed reaction is [protein]-peptidylproline (omega=180) = [protein]-peptidylproline (omega=0). Involved in protein export. Acts as a chaperone by maintaining the newly synthesized protein in an open conformation. Functions as a peptidyl-prolyl cis-trans isomerase. This is Trigger factor from Mycobacterium leprae (strain Br4923).